Consider the following 201-residue polypeptide: Probable chemoreceptor glutamine deamidase CheD 2 (201 aa).

Belongs to the CheD family.

The catalysed reaction is L-glutaminyl-[protein] + H2O = L-glutamyl-[protein] + NH4(+). Probably deamidates glutamine residues to glutamate on methyl-accepting chemotaxis receptors (MCPs), playing an important role in chemotaxis. This is Probable chemoreceptor glutamine deamidase CheD 2 from Chromobacterium violaceum (strain ATCC 12472 / DSM 30191 / JCM 1249 / CCUG 213 / NBRC 12614 / NCIMB 9131 / NCTC 9757 / MK).